The following is a 438-amino-acid chain: Flotillin-2 (438 aa).

This sequence belongs to the band 7/mec-2 family. Flotillin subfamily. In terms of assembly, heterooligomeric complex of flotillins 1 and 2.

Its subcellular location is the membrane. Functionally, may play a role in axon growth and regeneration. May be involved in epidermal cell adhesion and epidermal structure and function. This is Flotillin-2 from Drosophila melanogaster (Fruit fly).